We begin with the raw amino-acid sequence, 98 residues long: NADH-ubiquinone oxidoreductase chain 4L (98 aa).

3 consecutive transmembrane segments (helical) span residues 1–21 (MTSI…GVLI), 28–48 (STLL…ALLI), and 59–79 (APII…ALLV).

It belongs to the complex I subunit 4L family. Core subunit of respiratory chain NADH dehydrogenase (Complex I) which is composed of 45 different subunits.

It localises to the mitochondrion inner membrane. It catalyses the reaction a ubiquinone + NADH + 5 H(+)(in) = a ubiquinol + NAD(+) + 4 H(+)(out). Its function is as follows. Core subunit of the mitochondrial membrane respiratory chain NADH dehydrogenase (Complex I) which catalyzes electron transfer from NADH through the respiratory chain, using ubiquinone as an electron acceptor. Part of the enzyme membrane arm which is embedded in the lipid bilayer and involved in proton translocation. This chain is NADH-ubiquinone oxidoreductase chain 4L (MT-ND4L), found in Trichosurus vulpecula (Brush-tailed possum).